The primary structure comprises 263 residues: Aminoglycoside 3'-phosphotransferase (263 aa).

Residue Asp189 is the Proton acceptor of the active site.

This sequence belongs to the aminoglycoside phosphotransferase family.

It catalyses the reaction kanamycin A + ATP = kanamycin 3'-phosphate + ADP + H(+). Its function is as follows. Resistance to kanamycin and structurally-related aminoglycosides, including amikacin. The sequence is that of Aminoglycoside 3'-phosphotransferase (aphA) from Staphylococcus aureus.